We begin with the raw amino-acid sequence, 432 residues long: Peptidase B (432 aa).

Positions 196 and 201 each coordinate Mn(2+). K208 is an active-site residue. Mn(2+) contacts are provided by D219, D278, and E280. Residue R282 is part of the active site.

This sequence belongs to the peptidase M17 family. As to quaternary structure, homohexamer. Requires Mn(2+) as cofactor.

It localises to the cytoplasm. It catalyses the reaction Release of an N-terminal amino acid, Xaa, from a peptide or arylamide. Xaa is preferably Glu or Asp but may be other amino acids, including Leu, Met, His, Cys and Gln.. Its function is as follows. Probably plays an important role in intracellular peptide degradation. The chain is Peptidase B from Yersinia pestis bv. Antiqua (strain Antiqua).